Reading from the N-terminus, the 368-residue chain is Methylthioribose-1-phosphate isomerase (368 aa).

Substrate contacts are provided by residues 54–56, Arg-91, and Gln-204; that span reads RGA. Asp-245 functions as the Proton donor in the catalytic mechanism. 255–256 contacts substrate; it reads NK.

It belongs to the eIF-2B alpha/beta/delta subunits family. MtnA subfamily.

It carries out the reaction 5-(methylsulfanyl)-alpha-D-ribose 1-phosphate = 5-(methylsulfanyl)-D-ribulose 1-phosphate. It functions in the pathway amino-acid biosynthesis; L-methionine biosynthesis via salvage pathway; L-methionine from S-methyl-5-thio-alpha-D-ribose 1-phosphate: step 1/6. Its function is as follows. Catalyzes the interconversion of methylthioribose-1-phosphate (MTR-1-P) into methylthioribulose-1-phosphate (MTRu-1-P). In Gluconobacter oxydans (strain 621H) (Gluconobacter suboxydans), this protein is Methylthioribose-1-phosphate isomerase.